Reading from the N-terminus, the 338-residue chain is Anthranilate phosphoribosyltransferase (338 aa).

5-phospho-alpha-D-ribose 1-diphosphate contacts are provided by residues glycine 81, 84–85 (GD), threonine 89, 91–94 (NIST), 109–117 (KHGNRNLSS), and alanine 121. Glycine 81 is a binding site for anthranilate. Serine 93 provides a ligand contact to Mg(2+). Asparagine 112 contacts anthranilate. Arginine 167 contributes to the anthranilate binding site. Mg(2+) is bound by residues aspartate 226 and glutamate 227.

Belongs to the anthranilate phosphoribosyltransferase family. Homodimer. Mg(2+) serves as cofactor.

The enzyme catalyses N-(5-phospho-beta-D-ribosyl)anthranilate + diphosphate = 5-phospho-alpha-D-ribose 1-diphosphate + anthranilate. The protein operates within amino-acid biosynthesis; L-tryptophan biosynthesis; L-tryptophan from chorismate: step 2/5. Catalyzes the transfer of the phosphoribosyl group of 5-phosphorylribose-1-pyrophosphate (PRPP) to anthranilate to yield N-(5'-phosphoribosyl)-anthranilate (PRA). This is Anthranilate phosphoribosyltransferase from Cereibacter sphaeroides (strain ATCC 17029 / ATH 2.4.9) (Rhodobacter sphaeroides).